A 373-amino-acid polypeptide reads, in one-letter code: Putative glutamate--cysteine ligase 2-1 (373 aa).

This sequence belongs to the glutamate--cysteine ligase type 2 family. YbdK subfamily.

It carries out the reaction L-cysteine + L-glutamate + ATP = gamma-L-glutamyl-L-cysteine + ADP + phosphate + H(+). Its function is as follows. ATP-dependent carboxylate-amine ligase which exhibits weak glutamate--cysteine ligase activity. This chain is Putative glutamate--cysteine ligase 2-1, found in Legionella pneumophila (strain Paris).